A 350-amino-acid polypeptide reads, in one-letter code: Uroporphyrinogen decarboxylase (350 aa).

Residues 28 to 32 (RQAGR), D78, Y154, T209, and H325 contribute to the substrate site.

Belongs to the uroporphyrinogen decarboxylase family. In terms of assembly, homodimer.

The protein localises to the cytoplasm. It catalyses the reaction uroporphyrinogen III + 4 H(+) = coproporphyrinogen III + 4 CO2. Its pathway is porphyrin-containing compound metabolism; protoporphyrin-IX biosynthesis; coproporphyrinogen-III from 5-aminolevulinate: step 4/4. Functionally, catalyzes the decarboxylation of four acetate groups of uroporphyrinogen-III to yield coproporphyrinogen-III. This chain is Uroporphyrinogen decarboxylase, found in Nitrobacter hamburgensis (strain DSM 10229 / NCIMB 13809 / X14).